We begin with the raw amino-acid sequence, 367 residues long: Dihydroxyacetone phosphate transaminase Cj1437c (367 aa).

Residue K219 is modified to N6-(pyridoxal phosphate)lysine.

It belongs to the class-II pyridoxal-phosphate-dependent aminotransferase family. It depends on pyridoxal 5'-phosphate as a cofactor.

It catalyses the reaction dihydroxyacetone phosphate + L-glutamate = (S)-serinol phosphate + 2-oxoglutarate. It functions in the pathway capsule biogenesis; capsule polysaccharide biosynthesis. In terms of biological role, pyridoxal phosphate (PLP)-dependent transaminase involved in the biosynthesis of amidated D-glucuronic acid structures found on the capsular polysaccharide (CPS) of C.jejuni. Catalyzes the transamination of dihydroxyacetone phosphate (DHAP) to (S)-serinol phosphate in the presence of L-glutamate. Less active with L-aspartate. No activity with dihydroxyacetone or L-alanine. This Campylobacter jejuni subsp. jejuni serotype O:2 (strain ATCC 700819 / NCTC 11168) protein is Dihydroxyacetone phosphate transaminase Cj1437c.